Consider the following 54-residue polypeptide: Light-harvesting protein B-880 beta chain (54 aa).

Over 1–20 (AEDRSSLSGVSDAEAKEFHA) the chain is Cytoplasmic. Residues His19 and His37 each coordinate a bacteriochlorophyll. The helical transmembrane segment at 21-43 (LFVSSFTAFIVIAVLAHVLAWAW) threads the bilayer. Residues 44 to 54 (RPWIPGPKGWA) are Periplasmic-facing.

This sequence belongs to the antenna complex beta subunit family. The core complex is formed by different alpha and beta chains, binding bacteriochlorophyll molecules, and arranged most probably in tetrameric structures disposed around the reaction center. The non-pigmented gamma chains may constitute additional components.

The protein resides in the cell inner membrane. Its function is as follows. Antenna complexes are light-harvesting systems, which transfer the excitation energy to the reaction centers. The chain is Light-harvesting protein B-880 beta chain from Rhodoblastus acidophilus (Rhodopseudomonas acidophila).